The primary structure comprises 111 residues: ATP-dependent Clp protease adapter protein ClpS (111 aa).

The protein belongs to the ClpS family. Binds to the N-terminal domain of the chaperone ClpA.

Functionally, involved in the modulation of the specificity of the ClpAP-mediated ATP-dependent protein degradation. This Leptospira interrogans serogroup Icterohaemorrhagiae serovar copenhageni (strain Fiocruz L1-130) protein is ATP-dependent Clp protease adapter protein ClpS.